The following is an 811-amino-acid chain: Transmembrane protease serine 6 (811 aa).

A disordered region spans residues Met-1–Lys-48. Residues Met-1 to Pro-59 are Cytoplasmic-facing. Positions Pro-8–Val-18 are enriched in polar residues. A helical; Signal-anchor for type II membrane protein membrane pass occupies residues Leu-60–Tyr-80. The Extracellular portion of the chain corresponds to Lys-81–Thr-811. One can recognise an SEA domain in the interval Val-86–Val-209. N-linked (GlcNAc...) asparagine glycans are attached at residues Asn-138, Asn-184, Asn-216, Asn-338, Asn-433, and Asn-453. CUB domains are found at residues Val-213–Gln-336 and Phe-323–Leu-440. Residues Cys-335 and Cys-366 are joined by a disulfide bond. 3 LDL-receptor class A domains span residues Val-445–Ile-477, Lys-478–Pro-514, and Asn-518–Ser-555. 10 cysteine pairs are disulfide-bonded: Cys-458–Cys-470, Cys-464–Cys-480, Cys-474–Cys-489, Cys-491–Cys-503, Cys-497–Cys-516, Cys-510–Cys-525, Cys-531–Cys-543, Cys-538–Cys-557, Cys-551–Cys-566, and Cys-602–Cys-618. Asn-518 carries an N-linked (GlcNAc...) asparagine glycan. Positions Ile-577–Thr-811 constitute a Peptidase S1 domain. Residues His-617 and Asp-668 each act as charge relay system in the active site. Disulfide bonds link Cys-702–Cys-768, Cys-733–Cys-747, and Cys-758–Cys-787. Residue Ser-762 is the Charge relay system of the active site.

This sequence belongs to the peptidase S1 family. As to quaternary structure, interacts with HJV. In terms of processing, the single-chain zymogen undergoes autoproteolytic processing. This results in TMPRSS6 shedding from the cell surface and conversion into an activated two-chains form which is released extracellularly. The process involves a trans-activation mechanism that requires TMPRSS6 oligomerization. In terms of tissue distribution, expressed at highest levels in adult mice liver, kidney and uterus. Also strongly expressed within the nasal cavity by olfactory epithelial cells. A weak, but detectable, signal in adult mice tissues analyzed including brain, lung, heart, kidney, spleen, muscle, intestine, thymus and pancreas. No signal in residual embryonic yolk sac, developing kidney tubules or in embryonic tissues analyzed including lung, heart, gastrointestinal tract and epithelium of the oral cavity.

It is found in the cell membrane. Membrane-bound serine protease. Through the cleavage of cell surface HJV, a regulator of the expression of the iron absorption-regulating hormone hepicidin/HAMP, plays a role in iron homeostasis. The sequence is that of Transmembrane protease serine 6 (Tmprss6) from Mus musculus (Mouse).